The primary structure comprises 361 residues: Phosphoserine aminotransferase (361 aa).

Arginine 42 is a binding site for L-glutamate. Pyridoxal 5'-phosphate-binding positions include 76-77 (AR), tryptophan 102, threonine 153, aspartate 173, and glutamine 196. An N6-(pyridoxal phosphate)lysine modification is found at lysine 197. Pyridoxal 5'-phosphate is bound at residue 238–239 (NT).

This sequence belongs to the class-V pyridoxal-phosphate-dependent aminotransferase family. SerC subfamily. In terms of assembly, homodimer. Pyridoxal 5'-phosphate serves as cofactor.

It is found in the cytoplasm. It carries out the reaction O-phospho-L-serine + 2-oxoglutarate = 3-phosphooxypyruvate + L-glutamate. The catalysed reaction is 4-(phosphooxy)-L-threonine + 2-oxoglutarate = (R)-3-hydroxy-2-oxo-4-phosphooxybutanoate + L-glutamate. Its pathway is amino-acid biosynthesis; L-serine biosynthesis; L-serine from 3-phospho-D-glycerate: step 2/3. The protein operates within cofactor biosynthesis; pyridoxine 5'-phosphate biosynthesis; pyridoxine 5'-phosphate from D-erythrose 4-phosphate: step 3/5. Functionally, catalyzes the reversible conversion of 3-phosphohydroxypyruvate to phosphoserine and of 3-hydroxy-2-oxo-4-phosphonooxybutanoate to phosphohydroxythreonine. The protein is Phosphoserine aminotransferase of Buchnera aphidicola subsp. Schizaphis graminum (strain Sg).